Here is a 397-residue protein sequence, read N- to C-terminus: MTNASEMPRKLTILGSTGSIGTNTLDVVRQLGGRDGFEIMALTGAGNIALLAEQAREFGAQLAVTADDDKYEALKSALAGTGIKVAAGMAGLEEAASMDAGWVMAAIAGTPGLAPTLTAARRGADIALANKECLVSAGDVFLRTVKQGGGRLIPVDSEHSAIFQCLTGEYKQAVERIVLTASGGPFRTWSRDEMSNVTADIARAHPNWSMGLKVSIGSASMFNKGLEMIEAKYLFDLRPDQVDVIVHPQSIIHSMVGYTDGSYIAQLGSPDMRTAISYALTYPERGNLSVERLDFAKLARLDFEAPDEARFPALRLARMALERGGLQGAALNAAEETAFHAFVAGGIGFLDMAEIVETVMDRMHDGRTAETMDDVFSADEEARRHALELIATKEKAA.

Residues Thr-17, Gly-18, Ser-19, Ile-20, Ala-45, Asn-47, and Asn-130 each coordinate NADPH. Lys-131 contacts 1-deoxy-D-xylulose 5-phosphate. Position 132 (Glu-132) interacts with NADPH. A Mn(2+)-binding site is contributed by Asp-156. The 1-deoxy-D-xylulose 5-phosphate site is built by Ser-157, Glu-158, Ser-182, and His-205. Glu-158 is a binding site for Mn(2+). Gly-211 is a binding site for NADPH. 1-deoxy-D-xylulose 5-phosphate-binding residues include Ser-218, Asn-223, Lys-224, and Glu-227. Glu-227 contacts Mn(2+).

Belongs to the DXR family. Mg(2+) serves as cofactor. The cofactor is Mn(2+).

It carries out the reaction 2-C-methyl-D-erythritol 4-phosphate + NADP(+) = 1-deoxy-D-xylulose 5-phosphate + NADPH + H(+). It participates in isoprenoid biosynthesis; isopentenyl diphosphate biosynthesis via DXP pathway; isopentenyl diphosphate from 1-deoxy-D-xylulose 5-phosphate: step 1/6. Catalyzes the NADPH-dependent rearrangement and reduction of 1-deoxy-D-xylulose-5-phosphate (DXP) to 2-C-methyl-D-erythritol 4-phosphate (MEP). The protein is 1-deoxy-D-xylulose 5-phosphate reductoisomerase of Agrobacterium fabrum (strain C58 / ATCC 33970) (Agrobacterium tumefaciens (strain C58)).